A 180-amino-acid polypeptide reads, in one-letter code: SPbeta prophage-derived uncharacterized protein YosC (180 aa).

This is SPbeta prophage-derived uncharacterized protein YosC (yosC) from Bacillus subtilis (strain 168).